The chain runs to 312 residues: uncharacterized protein (312 aa).

Basic and acidic residues-rich tracts occupy residues 1–17 and 28–39; these read MAKYDHLELVRLPEQLE and PDRDGPRHSAKL. The interval 1-39 is disordered; that stretch reads MAKYDHLELVRLPEQLERRKHGGGSPPPDRDGPRHSAKL.

This is an uncharacterized protein from Sinorhizobium fredii (strain NBRC 101917 / NGR234).